The following is a 544-amino-acid chain: Chaperonin GroEL 2 (544 aa).

Residues 29-32, lysine 50, 86-90, glycine 414, and aspartate 494 contribute to the ATP site; these read TLGP and DGTTT.

It belongs to the chaperonin (HSP60) family. Forms a cylinder of 14 subunits composed of two heptameric rings stacked back-to-back. Interacts with the co-chaperonin GroES.

It localises to the cytoplasm. It catalyses the reaction ATP + H2O + a folded polypeptide = ADP + phosphate + an unfolded polypeptide.. Functionally, together with its co-chaperonin GroES, plays an essential role in assisting protein folding. The GroEL-GroES system forms a nano-cage that allows encapsulation of the non-native substrate proteins and provides a physical environment optimized to promote and accelerate protein folding. The protein is Chaperonin GroEL 2 of Psychromonas ingrahamii (strain DSM 17664 / CCUG 51855 / 37).